The primary structure comprises 345 residues: NADPH dehydrogenase (345 aa).

23–26 (SPMC) serves as a coordination point for FMN. A substrate-binding site is contributed by Y28. FMN-binding residues include A60 and Q102. 164–167 (HGAH) lines the substrate pocket. FMN contacts are provided by residues R215 and 307–308 (GR).

It belongs to the NADH:flavin oxidoreductase/NADH oxidase family. NamA subfamily. In terms of assembly, homotetramer. FMN is required as a cofactor.

It catalyses the reaction A + NADPH + H(+) = AH2 + NADP(+). Its function is as follows. Catalyzes the reduction of the double bond of an array of alpha,beta-unsaturated aldehydes and ketones. It also reduces the nitro group of nitroester and nitroaromatic compounds. It could have a role in detoxification processes. This is NADPH dehydrogenase from Bacillus thuringiensis (strain Al Hakam).